The primary structure comprises 90 residues: MVKNFSISVISKKENKENRGSIEFQILNFTKKIRRLTSHLKLHKKDFLSQKGLRKILGKRHRLLAYLSKKLKICYKDLIEKLEIRDTKTH.

The protein belongs to the universal ribosomal protein uS15 family. Part of the 30S ribosomal subunit.

Its subcellular location is the plastid. In Cuscuta reflexa (Southern Asian dodder), this protein is Small ribosomal subunit protein uS15c (rps15).